A 305-amino-acid polypeptide reads, in one-letter code: Ribonucleoside-diphosphate reductase small subunit (305 aa).

Residues E64, E94, and H97 each contribute to the Fe cation site. The active site involves Y101. Residues 150-170 (ILMFLIVEGIYFISSFYSISL) form a helical membrane-spanning segment. Residues E157, E191, and H194 each contribute to the Fe cation site.

This sequence belongs to the ribonucleoside diphosphate reductase small chain family. As to quaternary structure, heterotetramer composed of a homodimer of the large subunit (R1) and a homodimer of the small subunit (R2). Larger multisubunit protein complex are also active, composed of (R1)n(R2)n. Fe cation serves as cofactor.

It localises to the host membrane. It carries out the reaction a 2'-deoxyribonucleoside 5'-diphosphate + [thioredoxin]-disulfide + H2O = a ribonucleoside 5'-diphosphate + [thioredoxin]-dithiol. Its function is as follows. Ribonucleoside-diphosphate reductase holoenzyme provides the precursors necessary for viral DNA synthesis. Allows virus growth in non-dividing cells, as well as reactivation from latency in infected hosts. Catalyzes the biosynthesis of deoxyribonucleotides from the corresponding ribonucleotides. In Homo sapiens (Human), this protein is Ribonucleoside-diphosphate reductase small subunit.